The chain runs to 325 residues: Proto-oncogene Mas (325 aa).

Residues 1-36 (MDGSNVTSFVVEEPTNISTGRNASVGNAHRQIPIVH) are Extracellular-facing. Residues Asn-5, Asn-16, and Asn-22 are each glycosylated (N-linked (GlcNAc...) asparagine). Residues 37–61 (WVIMSISPVGFVENGILLWFLCFRM) traverse the membrane as a helical segment. Residues 62–65 (RRNP) are Cytoplasmic-facing. A helical membrane pass occupies residues 66–86 (FTVYITHLSIADISLLFCIFI). The Extracellular segment spans residues 87–104 (LSIDYALDYELSSGHYYT). Residues 105–128 (IVTLSVTFLFGYNTGLYLLTAISV) form a helical membrane-spanning segment. The Cytoplasmic segment spans residues 129-149 (ERCLSVLYPIWYRCHRPKYQS). The chain crosses the membrane as a helical span at residues 150-172 (ALVCALLWALSCLVTTMEYVMCI). The Extracellular portion of the chain corresponds to 173 to 185 (DREEESHSRNDCR). Residues 186–206 (AVIIFIAILSFLVFTPLMLVS) form a helical membrane-spanning segment. The Cytoplasmic portion of the chain corresponds to 207-224 (STILVVKIRKNTWASHSS). The helical transmembrane segment at 225–245 (KLYIVIMVTIIIFLIFAMPMR) threads the bilayer. The Extracellular portion of the chain corresponds to 246 to 263 (LLYLLYYEYWSTFGNLHH). Residues 264 to 284 (ISLLFSTINSSANPFIYFFVG) form a helical membrane-spanning segment. The Cytoplasmic segment spans residues 285 to 325 (SSKKKRFKESLKVVLTRAFKDEMQPRRQKDNCNTVTVETVV).

Belongs to the G-protein coupled receptor 1 family. Interacts with AGTR1. Interacts with FLNA (via filamin repeat 21); increases PKA-mediated phosphorylation of FLNA.

It localises to the cell membrane. In terms of biological role, receptor for angiotensin 1-7. Acts specifically as a functional antagonist of AGTR1 (angiotensin-2 type 1 receptor), although it up-regulates AGTR1 receptor levels. Positive regulation of AGTR1 levels occurs through activation of the G-proteins GNA11 and GNAQ, and stimulation of the protein kinase C signaling cascade. The antagonist effect on AGTR1 function is probably due to AGTR1 being physically altered by MAS1. The sequence is that of Proto-oncogene Mas (MAS1) from Homo sapiens (Human).